We begin with the raw amino-acid sequence, 1040 residues long: V(D)J recombination-activating protein 1 (1040 aa).

Positions 39–53 (EKAPEEAQKEKDSSE) are enriched in basic and acidic residues. Residues 39–71 (EKAPEEAQKEKDSSEGKPYLEQSPVVPEKPGGQ) are disordered. K233 is covalently cross-linked (Glycyl lysine isopeptide (Lys-Gly) (interchain with G-Cter in ubiquitin)). Zn(2+) is bound by residues C266, H270, C290, C293, H295, C305, H307, C310, C313, C325, C328, C355, C360, H372, and H376. An RING-type zinc finger spans residues 290-329 (CQICEHILADPVETSCKHLFCRICILRCLKVMGSYCPSCR). An RAG1-type zinc finger spans residues 351-380 (LMVKCPAQDCNEEVSLEKYNHHVSSHKESK). Residues 389 to 456 (GGRPRQHLLS…QADELEAIMQ (68 aa)) constitute a DNA-binding region (NBD). 3 residues coordinate a divalent metal cation: D600, D708, and E962.

The protein belongs to the RAG1 family. As to quaternary structure, homodimer. Component of the RAG complex composed of core components RAG1 and RAG2, and associated component HMGB1 or HMGB2. Interacts with DCAF1, leading to recruitment of the CUL4A-RBX1-DDB1-DCAF1/VPRBP complex to ubiquitinate proteins and limit error-prone repair during V(D)J recombination. Requires Mg(2+) as cofactor. It depends on Mn(2+) as a cofactor. In terms of processing, autoubiquitinated in the presence of CDC34/UBCH3. As to expression, maturing lymphoid cells and central nervous system.

The protein resides in the nucleus. It carries out the reaction S-ubiquitinyl-[E2 ubiquitin-conjugating enzyme]-L-cysteine + [acceptor protein]-L-lysine = [E2 ubiquitin-conjugating enzyme]-L-cysteine + N(6)-ubiquitinyl-[acceptor protein]-L-lysine.. Catalytic component of the RAG complex, a multiprotein complex that mediates the DNA cleavage phase during V(D)J recombination. V(D)J recombination assembles a diverse repertoire of immunoglobulin and T-cell receptor genes in developing B and T-lymphocytes through rearrangement of different V (variable), in some cases D (diversity), and J (joining) gene segments. In the RAG complex, RAG1 mediates the DNA-binding to the conserved recombination signal sequences (RSS) and catalyzes the DNA cleavage activities by introducing a double-strand break between the RSS and the adjacent coding segment. RAG2 is not a catalytic component but is required for all known catalytic activities. DNA cleavage occurs in 2 steps: a first nick is introduced in the top strand immediately upstream of the heptamer, generating a 3'-hydroxyl group that can attack the phosphodiester bond on the opposite strand in a direct transesterification reaction, thereby creating 4 DNA ends: 2 hairpin coding ends and 2 blunt, 5'-phosphorylated ends. The chromatin structure plays an essential role in the V(D)J recombination reactions and the presence of histone H3 trimethylated at 'Lys-4' (H3K4me3) stimulates both the nicking and haipinning steps. The RAG complex also plays a role in pre-B cell allelic exclusion, a process leading to expression of a single immunoglobulin heavy chain allele to enforce clonality and monospecific recognition by the B-cell antigen receptor (BCR) expressed on individual B-lymphocytes. The introduction of DNA breaks by the RAG complex on one immunoglobulin allele induces ATM-dependent repositioning of the other allele to pericentromeric heterochromatin, preventing accessibility to the RAG complex and recombination of the second allele. In addition to its endonuclease activity, RAG1 also acts as an E3 ubiquitin-protein ligase that mediates monoubiquitination of histone H3. Histone H3 monoubiquitination is required for the joining step of V(D)J recombination. Mediates polyubiquitination of KPNA1. This is V(D)J recombination-activating protein 1 (Rag1) from Mus musculus (Mouse).